A 1896-amino-acid chain; its full sequence is von Willebrand factor A domain-containing protein 8 (1896 aa).

The N-terminal 18 residues, 1-18, are a transit peptide targeting the mitochondrion; that stretch reads MHSRILFKGTAAAVAARR. 439–446 is a binding site for ATP; the sequence is GAKGCGKS. A disordered region spans residues 1536 to 1564; the sequence is GLDVSSPKHGKIDAKNAPHVGGNQWAGGT. Residues 1705–1887 form the VWFA domain; sequence RLRVLADVSG…KEIPQILQQI (183 aa).

Monomer.

The protein resides in the mitochondrion. In terms of biological role, exhibits ATPase activity in vitro. This Danio rerio (Zebrafish) protein is von Willebrand factor A domain-containing protein 8 (vwa8).